We begin with the raw amino-acid sequence, 426 residues long: Glutamate-1-semialdehyde 2,1-aminomutase (426 aa).

The residue at position 265 (Lys-265) is an N6-(pyridoxal phosphate)lysine.

It belongs to the class-III pyridoxal-phosphate-dependent aminotransferase family. HemL subfamily. As to quaternary structure, homodimer. Requires pyridoxal 5'-phosphate as cofactor.

It localises to the cytoplasm. The enzyme catalyses (S)-4-amino-5-oxopentanoate = 5-aminolevulinate. Its pathway is porphyrin-containing compound metabolism; protoporphyrin-IX biosynthesis; 5-aminolevulinate from L-glutamyl-tRNA(Glu): step 2/2. The protein is Glutamate-1-semialdehyde 2,1-aminomutase of Shigella flexneri serotype 5b (strain 8401).